A 68-amino-acid chain; its full sequence is MKLHNRVTVKTDGGPRREGTILAVEEFSEGVMYLVSLDDYPTGIWFFNELSSPDGIFVEPVVGETQAK.

The protein belongs to the DsrB family.

In Sodalis glossinidius (strain morsitans), this protein is Protein DsrB.